A 123-amino-acid polypeptide reads, in one-letter code: Large ribosomal subunit protein bL12 (123 aa).

The protein belongs to the bacterial ribosomal protein bL12 family. As to quaternary structure, homodimer. Part of the ribosomal stalk of the 50S ribosomal subunit. Forms a multimeric L10(L12)X complex, where L10 forms an elongated spine to which 2 to 4 L12 dimers bind in a sequential fashion. Binds GTP-bound translation factors.

Its function is as follows. Forms part of the ribosomal stalk which helps the ribosome interact with GTP-bound translation factors. Is thus essential for accurate translation. The protein is Large ribosomal subunit protein bL12 of Finegoldia magna (strain ATCC 29328 / DSM 20472 / WAL 2508) (Peptostreptococcus magnus).